The following is a 1183-amino-acid chain: M-phase phosphoprotein 9 (1183 aa).

Disordered stretches follow at residues 28–52, 300–334, and 472–495; these read GLNL…SGKT, KLKQ…EKSD, and ISFS…SFSQ. The segment covering 324 to 334 has biased composition (basic and acidic residues); it reads QSKKTPIEKSD. Residues 401–800 form a required for its centrosomal localization region; that stretch reads TSNEMKLPSL…EAQVKQVEHE (400 aa). Residues 451–500 are interaction with CEP97; the sequence is KPKQQISGIQPHGLPNALDDRISFSPDSVLEPSMSSPSDIDSFSQASNVT. A compositionally biased stretch (low complexity) spans 483–495; sequence SMSSPSDIDSFSQ. Residues 609–804 adopt a coiled-coil conformation; it reads DLRAYYESEI…KQVEHENMLS (196 aa). Phosphoserine; by TTBK2 is present on S781. K784 is covalently cross-linked (Glycyl lysine isopeptide (Lys-Gly) (interchain with G-Cter in ubiquitin)). Phosphoserine; by TTBK2 is present on S788. Residues 801-1031 are interaction with KIF24; that stretch reads NMLSLRHNSR…PVSTLQRTNP (231 aa). Disordered regions lie at residues 863–894 and 910–999; these read LGHR…SDTP and NWGT…GFSH. Residues 921 to 936 show a composition bias toward polar residues; sequence SNINPRQTETSVNASR. Low complexity predominate over residues 949-967; that stretch reads LNSASQRSSSLPPSNRKSS. S994 carries the post-translational modification Phosphoserine. Residues 1109–1174 adopt a coiled-coil conformation; it reads RTLAETERFF…GSVRMTLKKF (66 aa).

Interacts with CCP110, CEP97 and KIF24. Post-translationally, TTBK2-mediated phosphorylation at Ser-781 and Ser-788, promotes its ubiquitination at Lys-784 leading to proteasomal degradation, loss of MPHOSPH9 facilitates the removal of the CP110-CEP97 complex from the mother centrioles, promoting the initiation of ciliogenesis. Phosphorylated in M (mitotic) phase. In terms of processing, ubiquitinated at Lys-784, leading to proteasomal degradation.

The protein localises to the cytoplasm. The protein resides in the cytoskeleton. It localises to the microtubule organizing center. It is found in the centrosome. Its subcellular location is the centriole. The protein localises to the golgi apparatus membrane. In terms of biological role, negatively regulates cilia formation by recruiting the CP110-CEP97 complex (a negative regulator of ciliogenesis) at the distal end of the mother centriole in ciliary cells. At the beginning of cilia formation, MPHOSPH9 undergoes TTBK2-mediated phosphorylation and degradation via the ubiquitin-proteasome system and removes itself and the CP110-CEP97 complex from the distal end of the mother centriole, which subsequently promotes cilia formation. In Homo sapiens (Human), this protein is M-phase phosphoprotein 9 (MPHOSPH9).